Reading from the N-terminus, the 416-residue chain is MIRWLLLMYLGITCQGVTDIHSRNLTNSLKVIYEWKYIDYDFGSDEKRQAAIQSGDYNYTMNYLLDTDQWGDKTFVIIMKFNGVPSSLNVITNKTGNGGPLLAPYPDWTWAKNENCSGITSAYKIEIDMCDRLWVLDSGLINNVRSVCPPQLLVFDLNTSQLLKQVKIPHDIAVNTTTEKGALVTLSVQLLSCEVNGSTLVYIGDNEGFALIIYNNSDNSFQRLTSSTFASDPRYTTFTINGESFTLQSGIFGMALSPLTQNLYYSALSSHNLNYVNTEQFVKSQYQANNVHYQGKENILWTQASAKGISDNGVLFFGLVGDTSLACWNENRLLDRRNIEVVAKNKETLQAITGLKVKRRISFILVHGFPLEYEYVLAVSNRIQKVIYGFDFNDVNFRILIANVNDLIKNTRCISP.

The signal sequence occupies residues 1–16 (MIRWLLLMYLGITCQG). Residues N24, N58, N93, N115, N158, N175, N196, and N215 are each glycosylated (N-linked (GlcNAc...) asparagine).

The protein belongs to the major royal jelly protein family. In terms of tissue distribution, expressed at very low levels in the hypopharyngeal glands of worker honey bees (at protein level). Secreted into bee venom in the sting apparatus (at protein level). Expressed in the spermatheca of adult queen bees (at protein level); expression levels are higher in mated queens than in virgin queens. Along with Mrjp9 expressed at very low levels in the head of worker bees compared to other major royal jelly proteins.

It localises to the secreted. Functionally, component of bee sting venom. Component of royal jelly, a substance produced in the hypopharyngeal gland containing proteins, free amino acids, fatty acids, sugars and other nutrients, which is fed to developing larvae by worker nurse bees; may be present only at trace levels. All larvae are fed some royal jelly (also known as worker jelly) early in their development but it forms the principal source of nutrition for larvae destined to become queen bees. Produced in the spermatheca of adult queen bees, along with other major royal jelly proteins, where it may act as a nutrient supply for sperm stored by mated queens, or be involved in energy metabolism. In Apis mellifera (Honeybee), this protein is Major royal jelly protein 8.